Consider the following 182-residue polypeptide: Large ribosomal subunit protein uL10 (182 aa).

The protein belongs to the universal ribosomal protein uL10 family. In terms of assembly, part of the ribosomal stalk of the 50S ribosomal subunit. The N-terminus interacts with L11 and the large rRNA to form the base of the stalk. The C-terminus forms an elongated spine to which L12 dimers bind in a sequential fashion forming a multimeric L10(L12)X complex.

Its function is as follows. Forms part of the ribosomal stalk, playing a central role in the interaction of the ribosome with GTP-bound translation factors. The protein is Large ribosomal subunit protein uL10 of Chloroflexus aurantiacus (strain ATCC 29364 / DSM 637 / Y-400-fl).